The primary structure comprises 1231 residues: Multifunctional 2-oxoglutarate metabolism enzyme (1231 aa).

Positions 1–41 (MANISSPFGQNEWLVEAMYRKFRDDPSSVDPSWHEFLVDYS) are 2-oxoglutarate dehydrogenase E1, N-terminal part. A compositionally biased stretch (basic and acidic residues) spans 24 to 37 (DDPSSVDPSWHEFL). The segment at 24–56 (DDPSSVDPSWHEFLVDYSPEPTSQPAAEPTRVT) is disordered. The tract at residues 42-88 (PEPTSQPAAEPTRVTSPLVAERAAAAAPQAPPKPADTAAAGNGVVAA) is linker. Residues 89–337 (LAAKTAVPPP…LRTIHELLLS (249 aa)) are succinyltransferase E2. His-316 (proton acceptor; for succinyltransferase activity) is an active-site residue. The segment at 338–1231 (DGFWDEVFRE…QQEILDEAFG (894 aa)) is 2-oxoglutarate dehydrogenase E1, C-terminal part. Thiamine diphosphate is bound at residue Arg-542. 2-oxoglutarate is bound by residues His-581 and Ser-606. Thiamine diphosphate contacts are provided by Ser-606, Leu-608, Asp-649, Ala-650, Ala-651, and Asn-682. Mg(2+) is bound at residue Asp-649. 2 residues coordinate Mg(2+): Asn-682 and Ile-684. Positions 787 to 817 (DISMKEAEDALRDYQGQLERVFNEVRELEKH) form a coiled coil. His-1024 contacts 2-oxoglutarate. Acetyl-CoA contacts are provided by Thr-1042, Arg-1058, Lys-1093, Ser-1096, Gln-1146, Arg-1153, and Arg-1154.

This sequence belongs to the 2-oxoacid dehydrogenase family. Kgd subfamily. As to quaternary structure, homodimer. The 2-oxoglutarate dehydrogenase (ODH) complex contains multiple copies of three enzymatic components: 2-oxoglutarate dehydrogenase (E1), dihydrolipoamide succinyltransferase (E2) and lipoamide dehydrogenase (E3). Mg(2+) serves as cofactor. The cofactor is thiamine diphosphate.

It carries out the reaction glyoxylate + 2-oxoglutarate + H(+) = 2-hydroxy-3-oxoadipate + CO2. The enzyme catalyses 2-oxoglutarate + H(+) = succinate semialdehyde + CO2. The catalysed reaction is N(6)-[(R)-lipoyl]-L-lysyl-[protein] + 2-oxoglutarate + H(+) = N(6)-[(R)-S(8)-succinyldihydrolipoyl]-L-lysyl-[protein] + CO2. It catalyses the reaction N(6)-[(R)-dihydrolipoyl]-L-lysyl-[protein] + succinyl-CoA = N(6)-[(R)-S(8)-succinyldihydrolipoyl]-L-lysyl-[protein] + CoA. It functions in the pathway carbohydrate metabolism; tricarboxylic acid cycle; succinate from 2-oxoglutarate (transferase route): step 1/2. The protein operates within carbohydrate metabolism; tricarboxylic acid cycle; succinyl-CoA from 2-oxoglutarate (dehydrogenase route): step 1/1. Its activity is regulated as follows. Alpha-ketoglutarate dehydrogenase and decarboxylase activities are inhibited by unphosphorylated GarA, and allosterically activated by acetyl-CoA, the main substrate of the TCA cycle. Shows three enzymatic activities that share a first common step, the attack of thiamine-PP on 2-oxoglutarate (alpha-ketoglutarate, KG), leading to the formation of an enamine-thiamine-PP intermediate upon decarboxylation. Thus, displays KGD activity, catalyzing the decarboxylation from five-carbon 2-oxoglutarate to four-carbon succinate semialdehyde (SSA). Also catalyzes C-C bond formation between the activated aldehyde formed after decarboxylation of alpha-ketoglutarate and the carbonyl of glyoxylate (GLX), to yield 2-hydroxy-3-oxoadipate (HOA), which spontaneously decarboxylates to form 5-hydroxylevulinate (HLA). And is also a component of the 2-oxoglutarate dehydrogenase (ODH) complex, that catalyzes the overall conversion of 2-oxoglutarate to succinyl-CoA and CO(2). The KG decarboxylase and KG dehydrogenase reactions provide two alternative, tightly regulated, pathways connecting the oxidative and reductive branches of the TCA cycle. The protein is Multifunctional 2-oxoglutarate metabolism enzyme (kgd) of Mycobacterium bovis (strain ATCC BAA-935 / AF2122/97).